The primary structure comprises 180 residues: Cytidylate kinase (180 aa).

7-15 (GLPGSGTTT) contacts ATP.

It belongs to the cytidylate kinase family. Type 2 subfamily.

It is found in the cytoplasm. The catalysed reaction is CMP + ATP = CDP + ADP. It catalyses the reaction dCMP + ATP = dCDP + ADP. The polypeptide is Cytidylate kinase (Methanosarcina barkeri (strain Fusaro / DSM 804)).